Here is a 110-residue protein sequence, read N- to C-terminus: N(4)-acetylcytidine amidohydrolase (110 aa).

Positions 6-93 (TFFERFEQDI…IQEIYPGLEQ (88 aa)) constitute an ASCH domain. The Proton acceptor role is filled by Lys-20. Catalysis depends on Thr-23, which acts as the Nucleophile. Glu-73 (proton donor) is an active-site residue.

The protein belongs to the N(4)-acetylcytidine amidohydrolase family.

The catalysed reaction is N(4)-acetylcytidine + H2O = cytidine + acetate + H(+). The enzyme catalyses N(4)-acetyl-2'-deoxycytidine + H2O = 2'-deoxycytidine + acetate + H(+). It catalyses the reaction N(4)-acetylcytosine + H2O = cytosine + acetate + H(+). Functionally, catalyzes the hydrolysis of N(4)-acetylcytidine (ac4C). The sequence is that of N(4)-acetylcytidine amidohydrolase from Shewanella sp. (strain ANA-3).